The following is a 304-amino-acid chain: MRLPIFLDTDPGIDDAVAIAAAIFAPELDLQLMTTVAGNVSVEKTTRNALQLLHFWNAEIPLAQGAAVPLVRAPRDAASVHGESGMAGYDFVEHNRKPLGIPAFLAIRDALMCAPEPVTLVAIGPLTNIALLLSQCPECKPYIRRLVIMGGSAGRGNCTPNAEFNIAADPEAAACVFRSGIEIVMCGLDVTNQAILTPDYLATLPELNRTGKMLHALFSHYRSGSMQSGLRMHDLCAIAWLVRPDLFTLKPCFVAVETQGEFTSGTTVVDIDGCRGKPANVQVALDLNVKGFQQWVPEVLALAS.

His-233 is a catalytic residue.

The protein belongs to the IUNH family. RihC subfamily.

Its function is as follows. Hydrolyzes both purine and pyrimidine ribonucleosides with a broad-substrate specificity. This is Non-specific ribonucleoside hydrolase RihC from Shigella dysenteriae serotype 1 (strain Sd197).